An 836-amino-acid polypeptide reads, in one-letter code: Translation initiation factor IF-2 (836 aa).

A compositionally biased stretch (basic residues) spans 1–17 (MLRLMRQKKLSIQRRTK). Disordered stretches follow at residues 1–43 (MLRL…RTVK) and 83–240 (AAKK…KGAA). A compositionally biased stretch (low complexity) spans 18–27 (TTVSSTTTGG). A compositionally biased stretch (basic and acidic residues) spans 83–153 (AAKKEADEKV…AAEEAKRYAE (71 aa)). Residues 154–167 (ADDSDNESSSEDYS) are compositionally biased toward acidic residues. Over residues 192–202 (RGKNKVAKAKK) the composition is skewed to basic residues. The segment covering 203–229 (GGRDDENSKNSKNERESNRKNQKDAKF) has biased composition (basic and acidic residues). Positions 335–505 (TRAPVVTIMG…LLQSEVLELT (171 aa)) constitute a tr-type G domain. Positions 344 to 351 (GHVDHGKT) are G1. 344–351 (GHVDHGKT) is a GTP binding site. Residues 369–373 (GITQH) are G2. A G3 region spans residues 391–394 (DTPG). GTP is bound by residues 391–395 (DTPGH) and 445–448 (NKID). Positions 445-448 (NKID) are G4. Positions 481–483 (SAK) are G5.

The protein belongs to the TRAFAC class translation factor GTPase superfamily. Classic translation factor GTPase family. IF-2 subfamily.

Its subcellular location is the cytoplasm. Its function is as follows. One of the essential components for the initiation of protein synthesis. Protects formylmethionyl-tRNA from spontaneous hydrolysis and promotes its binding to the 30S ribosomal subunits. Also involved in the hydrolysis of GTP during the formation of the 70S ribosomal complex. The sequence is that of Translation initiation factor IF-2 from Haemophilus influenzae (strain PittEE).